We begin with the raw amino-acid sequence, 238 residues long: Pre-protein VI (238 aa).

Positions Met1 to Gly33 are excised as a propeptide. Residues Ala34–Trp54 form an amphipathic alpha-helix essential for membrane lytic activity region. The tract at residues Asn36–Asn53 is involved in endosomal membrane lysis. Positions Gly48–Thr74 are interaction with hexon protein. The short motif at Leu67–Val76 is the Nuclear export signal element. Residues Pro153–Tyr156 carry the PPXY motif motif. The interval Thr187–Val212 is disordered. The Nuclear export signal motif lies at Gly219–Ser230. The interval Leu221–Val227 is interaction with hexon protein. Positions Gly228–Phe238 are binds to importin alpha/beta, involved in hexon nuclear import. Positions Lys233–Arg236 match the Nuclear localization signal motif.

This sequence belongs to the adenoviridae protein VI family. In terms of assembly, interacts with hexon protein; this interaction allows nuclear import of hexon trimers and possibly pre-capsid assembly. Interacts (via C-terminal NLS) with importin alpha/beta. Interacts (via PPxY motif) with host NEDD4 ubiquitine ligase; this interaction might play a role in virus intracellular transport during entry. Part of a complex composed of the core-capsid bridging protein, the endosome lysis protein VI and the hexon-linking protein VIII; these interactions bridge the virus core to the capsid. Interacts with peripentonal hexons; this interaction stabilizes the capsid by gluing two peripentonal hexons together and joining them with an adjacent group-of-nine hexon. As to quaternary structure, heterodimer with the viral protease; disulfide-linked. Interacts with the viral protease. In terms of processing, ubiquitinated by Nedd4 following partial capsid disassembly; which might play a role in intracellular virus movement during entry. Contains the major nuclear import and export signals. Proteolytically removed during virion maturation. The processing of the C-terminus turns the precursor into a mature viral structural protein and abrogates its ability to promote hexon import and act as a potential chaperone protein.

It localises to the host nucleus. The protein resides in the host cytoplasm. The protein localises to the virion. In terms of biological role, during virus assembly, promotes hexon trimers nuclear import through nuclear pore complexes via an importin alpha/beta-dependent mechanism. By analogy to herpesviruses capsid assembly, might act as a chaperone to promote the formation of the icosahedral capsid. Its function is as follows. Structural component of the virion that provides increased stability to the particle shell through its interaction with the core-capsid bridging protein and the hexon-linking protein VIII. Fibers shedding during virus entry into host cell allows the endosome lysis protein to be exposed as a membrane-lytic peptide. Exhibits pH-independent membrane fragmentation activity and probably mediates viral rapid escape from host endosome via organellar membrane lysis. It is not clear if it then remains partially associated with the capsid and involved in the intracellular microtubule-dependent transport of capsid to the nucleus, or if it is lost during endosomal penetration. Functionally, cofactor that activates the viral protease. Binds to viral protease in a 1:1 ratio. The polypeptide is Pre-protein VI (Canine adenovirus serotype 1 (strain CLL) (CAdV-1)).